The sequence spans 74 residues: UPF0435 protein GWCH70_0415 (74 aa).

This sequence belongs to the UPF0435 family.

This chain is UPF0435 protein GWCH70_0415, found in Geobacillus sp. (strain WCH70).